Here is a 197-residue protein sequence, read N- to C-terminus: NADH-quinone oxidoreductase subunit B (197 aa).

Cys63, Cys64, Cys129, and Cys159 together coordinate [4Fe-4S] cluster.

It belongs to the complex I 20 kDa subunit family. In terms of assembly, NDH-1 is composed of 14 different subunits. Subunits NuoB, C, D, E, F, and G constitute the peripheral sector of the complex. Requires [4Fe-4S] cluster as cofactor.

The protein localises to the cell inner membrane. The enzyme catalyses a quinone + NADH + 5 H(+)(in) = a quinol + NAD(+) + 4 H(+)(out). Its function is as follows. NDH-1 shuttles electrons from NADH, via FMN and iron-sulfur (Fe-S) centers, to quinones in the respiratory chain. The immediate electron acceptor for the enzyme in this species is believed to be a menaquinone. Couples the redox reaction to proton translocation (for every two electrons transferred, four hydrogen ions are translocated across the cytoplasmic membrane), and thus conserves the redox energy in a proton gradient. In Bacteroides thetaiotaomicron (strain ATCC 29148 / DSM 2079 / JCM 5827 / CCUG 10774 / NCTC 10582 / VPI-5482 / E50), this protein is NADH-quinone oxidoreductase subunit B.